Here is a 356-residue protein sequence, read N- to C-terminus: S-adenosylmethionine:tRNA ribosyltransferase-isomerase (356 aa).

This sequence belongs to the QueA family. In terms of assembly, monomer.

It is found in the cytoplasm. The catalysed reaction is 7-aminomethyl-7-carbaguanosine(34) in tRNA + S-adenosyl-L-methionine = epoxyqueuosine(34) in tRNA + adenine + L-methionine + 2 H(+). Its pathway is tRNA modification; tRNA-queuosine biosynthesis. In terms of biological role, transfers and isomerizes the ribose moiety from AdoMet to the 7-aminomethyl group of 7-deazaguanine (preQ1-tRNA) to give epoxyqueuosine (oQ-tRNA). This chain is S-adenosylmethionine:tRNA ribosyltransferase-isomerase, found in Escherichia fergusonii (strain ATCC 35469 / DSM 13698 / CCUG 18766 / IAM 14443 / JCM 21226 / LMG 7866 / NBRC 102419 / NCTC 12128 / CDC 0568-73).